Consider the following 159-residue polypeptide: Nascent polypeptide-associated complex subunit beta (159 aa).

Disordered regions lie at residues 1–39 (MDME…GMDD) and 121–159 (ESYQ…DKVE). Basic residues predominate over residues 23-32 (TPRRKVKNVH). The region spanning 36 to 101 (GMDDKKLQTS…GEDKELTELV (66 aa)) is the NAC-A/B domain. The segment covering 136-153 (KDDDEDDDDIPDLVEGEN) has biased composition (acidic residues).

This sequence belongs to the NAC-beta family. As to quaternary structure, part of the nascent polypeptide-associated complex (NAC), consisting of EGD2 and EGD1. NAC associates with ribosomes via EGD1.

It is found in the cytoplasm. Its subcellular location is the nucleus. In terms of biological role, component of the nascent polypeptide-associated complex (NAC), a dynamic component of the ribosomal exit tunnel, protecting the emerging polypeptides from interaction with other cytoplasmic proteins to ensure appropriate nascent protein targeting. The NAC complex also promotes mitochondrial protein import by enhancing productive ribosome interactions with the outer mitochondrial membrane and blocks the inappropriate interaction of ribosomes translating non-secretory nascent polypeptides with translocation sites in the membrane of the endoplasmic reticulum. EGD1 may act as a transcription factor that exert a negative effect on the expression of several genes that are transcribed by RNA polymerase II. The sequence is that of Nascent polypeptide-associated complex subunit beta (egd1) from Botryotinia fuckeliana (strain B05.10) (Noble rot fungus).